Consider the following 550-residue polypeptide: MPAAWMPVLRLGAYASRVPGPAGGDGAVPIAITCFTRGLDIRKEKADVLCPAGCPLEEFSVFGNIVYASVSSICGAAVHRGVISISGGPVRVYSLPGRENYSSVDANGIQSQTLARWSASFTVTKGKSSTQEATGQAVSTARPPTGKRLKKTPEKKTGNKDCKADIAFLIDGSFNIGQRRFNLQKNFVGKVALMLGIGTEGPHVGLVQASEHPKIEFYLKNFTSAKDVLFAIKEVGFRGGNSNTGKALKHTAQKFFTADTGMRKGIPKVVVVFIDGWPSDDIEEAGIVAREFGVNVFIVSVAKPIPEELGMVQDVAFVDKAVCRNNGFFSYHMPNWFGTTKYVKPLVQKLCSHEQMMCSKTCYNSVNIAFLIDGSSSVGDSNFRLMLEFVSNIAKTFEISDIGAKIAAVQFTYDQRTEFSFTDYSTKENVLAVIRSIRYMSGGTATGDAISFTVRNVFGPVRDSPNKNFLVIITDGQSYDDVRGPAAAAHDAGITIFSVGVAWAPLDDLKDMASKPKESHAFFTREFTGLEPIVSDIIRGICRDFLESQQ.

The signal sequence occupies residues 1 to 15 (MPAAWMPVLRLGAYA). An LCCL domain is found at 28-121 (VPIAITCFTR…QTLARWSASF (94 aa)). Disulfide bonds link Cys34–Cys50 and Cys54–Cys74. Asn100 carries an N-linked (GlcNAc...) asparagine glycan. The span at 126–139 (GKSSTQEATGQAVS) shows a compositional bias: polar residues. A disordered region spans residues 126–158 (GKSSTQEATGQAVSTARPPTGKRLKKTPEKKTG). 2 VWFA domains span residues 165 to 350 (DIAF…VQKL) and 367 to 537 (NIAF…VSDI).

In terms of assembly, monomer. May form homodimer. Interacts with type II collagen. Interacts with ANXA2. Interacts with SLC44A2. In terms of processing, N-glycosylated.

The protein resides in the secreted. It is found in the extracellular space. It localises to the extracellular matrix. In terms of biological role, plays a role in the control of cell shape and motility in the trabecular meshwork. The polypeptide is Cochlin (COCH) (Cavia porcellus (Guinea pig)).